The primary structure comprises 358 residues: Endoplasmic reticulum junction formation protein lunapark-B (358 aa).

Residues 1-45 (MGAIISRWKTKLTTVEQLENIDKEIKQLEEFRAKNQRLQKLWVGR) are Cytoplasmic-facing. Positions 9-41 (KTKLTTVEQLENIDKEIKQLEEFRAKNQRLQKL) form a coiled coil. A helical membrane pass occupies residues 46-66 (LLLYSSALYLLISLFVYLLYL). The Lumenal segment spans residues 67–69 (PEQ). The helical transmembrane segment at 70–90 (WLLRLAMALPFFIYPVLVWFI) threads the bilayer. The Cytoplasmic portion of the chain corresponds to 91 to 358 (RRFLIFLFSK…SRGMDKHGRA (268 aa)). The stretch at 99–128 (SKRSERNNDKLEDLKATKKKILEEVMETET) forms a coiled coil. Residues 275–300 (CQQCFSHNGMALKEEFEYLAFRCAYC) form a C4-type; plays a role in ER morphology zinc finger. Positions 320–358 (NFEKRLRAESSTPGPAPHSATDTEESAPPSRGMDKHGRA) are disordered.

It belongs to the lunapark family. As to quaternary structure, homodimer; homodimerization requires the C4-type zinc finger motif and decreases during mitosis in a phosphorylation-dependent manner. Phosphorylated. Phosphorylation occurs during interphase. Phosphorylation also occurs during mitosis; these phosphorylations reduce both its homodimerization and the ER three-way tubular junction formation.

The protein resides in the endoplasmic reticulum membrane. In terms of biological role, endoplasmic reticulum (ER)-shaping membrane protein that plays a role in determining ER morphology. Involved in the stabilization of nascent three-way ER tubular junctions within the ER network. May also play a role as a curvature-stabilizing protein within three-way ER tubular junction network. In Takifugu rubripes (Japanese pufferfish), this protein is Endoplasmic reticulum junction formation protein lunapark-B (lnpkb).